Reading from the N-terminus, the 169-residue chain is Myosin regulatory light chain 11 (169 aa).

A N,N,N-trimethylalanine modification is found at A2. 2 positions are modified to phosphoserine: S15 and S16. Phosphothreonine occurs at positions 25 and 35. Residues 25-60 (TQIQEFKEAFTVIDQNRDGIIDKEDLRDTFAAMGRL) enclose the EF-hand 1 domain. Positions 38, 40, 42, and 49 each coordinate Ca(2+). A Phosphoserine modification is found at S75. EF-hand domains are found at residues 95–130 (DPED…QCDR) and 131–166 (FSQE…GDAK). The residue at position 101 (T101) is a Phosphothreonine.

Myosin is a hexamer of 2 heavy chains and 4 light chains.

Its function is as follows. Myosin regulatory subunit that plays an essential to maintain muscle integrity during early development. Plays a role in muscle contraction. This chain is Myosin regulatory light chain 11 (Myl11), found in Rattus norvegicus (Rat).